Consider the following 159-residue polypeptide: MCAKIALLLVLVGAASAAVLPDKFYGTFDLDHSENFDEYLTAKGYGWFTRKLVTFATFKKVFTKTSNKNLFDYSNLTSKKDVHYKNVQLGKAFQGEGLDSTKHEITFTLKDGHLFEHHKPLEGGDAKEETYEYLFDKEFLLVRMSFNGVEGRRFYKRLP.

A signal peptide spans 1–17 (MCAKIALLLVLVGAASA).

It belongs to the calycin superfamily. Fatty-acid binding protein (FABP) family. As to expression, first detected in hypodermal precursor cells at the time of gastrulation. From the two-fold stage through to three-fold stages, expression is localized exclusively to hyp-7 but disappears in newly hatched L1s and subsequent developmental stages. Expression from L1 to adult stages is found in a single neuron in the ventral cord with a process into the nerve ring.

It localises to the secreted. In terms of biological role, may play a role in sequestering potentially toxic fatty acids and their peroxidation products, or it may be involved in the maintenance of the impermeable lipid layer of the eggshell. The protein is Fatty acid-binding protein homolog 1 (lbp-1) of Caenorhabditis elegans.